The chain runs to 138 residues: ATP synthase epsilon chain (138 aa).

Belongs to the ATPase epsilon chain family. As to quaternary structure, F-type ATPases have 2 components, CF(1) - the catalytic core - and CF(0) - the membrane proton channel. CF(1) has five subunits: alpha(3), beta(3), gamma(1), delta(1), epsilon(1). CF(0) has three main subunits: a, b and c.

The protein localises to the cell inner membrane. Produces ATP from ADP in the presence of a proton gradient across the membrane. The chain is ATP synthase epsilon chain from Polaromonas sp. (strain JS666 / ATCC BAA-500).